The following is an 860-amino-acid chain: Linoleate 9S-lipoxygenase A (860 aa).

Positions 29-159 (NALDFTDLAG…RYKSDRIFFA (131 aa)) constitute a PLAT domain. The region spanning 162-860 (PYLPSETPEL…GKGIPNSVSI (699 aa)) is the Lipoxygenase domain. The interval 209-246 (PDQGKENVRTTLGGSADYPYPRRGRTGRPPTRTDPKSE) is disordered. Fe cation is bound by residues histidine 521, histidine 526, histidine 712, asparagine 716, and isoleucine 860.

Belongs to the lipoxygenase family. As to quaternary structure, monomer. Requires Fe cation as cofactor. As to expression, expressed in germinating seeds as well as in ripening fruit.

The protein resides in the cytoplasm. It catalyses the reaction (9Z,12Z)-octadecadienoate + O2 = (9S)-hydroperoxy-(10E,12Z)-octadecadienoate. It functions in the pathway lipid metabolism; oxylipin biosynthesis. Functionally, plant lipoxygenase may be involved in a number of diverse aspects of plant physiology including growth and development, pest resistance, and senescence or responses to wounding. It catalyzes the hydroperoxidation of lipids containing a cis,cis-1,4-pentadiene structure. The polypeptide is Linoleate 9S-lipoxygenase A (LOX1.1) (Solanum lycopersicum (Tomato)).